The chain runs to 72 residues: Translation initiation factor IF-1 (72 aa).

The 72-residue stretch at 1–72 (MAKEGNIEME…SKGRIVYRAR (72 aa)) folds into the S1-like domain.

It belongs to the IF-1 family. Component of the 30S ribosomal translation pre-initiation complex which assembles on the 30S ribosome in the order IF-2 and IF-3, IF-1 and N-formylmethionyl-tRNA(fMet); mRNA recruitment can occur at any time during PIC assembly.

It is found in the cytoplasm. One of the essential components for the initiation of protein synthesis. Stabilizes the binding of IF-2 and IF-3 on the 30S subunit to which N-formylmethionyl-tRNA(fMet) subsequently binds. Helps modulate mRNA selection, yielding the 30S pre-initiation complex (PIC). Upon addition of the 50S ribosomal subunit IF-1, IF-2 and IF-3 are released leaving the mature 70S translation initiation complex. The chain is Translation initiation factor IF-1 from Hahella chejuensis (strain KCTC 2396).